The following is a 206-amino-acid chain: Enterobactin synthase component D (206 aa).

Mg(2+) contacts are provided by Asp-107, Glu-109, and Glu-152.

It belongs to the P-Pant transferase superfamily. EntD family. EntB, EntD, EntE, and EntF form a multienzyme complex called enterobactin synthase. Requires Mg(2+) as cofactor.

It localises to the membrane. It catalyses the reaction apo-[aryl-carrier protein] + CoA = holo-[aryl-carrier protein] + adenosine 3',5'-bisphosphate + H(+). The catalysed reaction is apo-[peptidyl-carrier protein] + CoA = holo-[peptidyl-carrier protein] + adenosine 3',5'-bisphosphate + H(+). It participates in siderophore biosynthesis; enterobactin biosynthesis. Functionally, involved in the biosynthesis of the siderophore enterobactin (enterochelin), which is a macrocyclic trimeric lactone of N-(2,3-dihydroxybenzoyl)-serine. The serine trilactone serves as a scaffolding for the three catechol functionalities that provide hexadentate coordination for the tightly ligated iron(2+) atoms. Plays an essential role in the assembly of the enterobactin by catalyzing the transfer of the 4'-phosphopantetheine (Ppant) moiety from coenzyme A to the apo-domains of both EntB (ArCP domain) and EntF (PCP domain) to yield their holo-forms which make them competent for the activation of 2,3-dihydroxybenzoate (DHB) and L-serine, respectively. This Escherichia coli (strain K12) protein is Enterobactin synthase component D.